The chain runs to 1438 residues: Pyochelin synthetase PchE (1438 aa).

In terms of domain architecture, Carrier 1 spans 6–85; the sequence is DSRTALRDWL…AWLDLLACAD (80 aa). S46 bears the O-(pantetheine 4'-phosphoryl)serine mark. The segment at 136–442 is condensation/cyclization; the sequence is RTRDVDPQRL…ARRQGQPRSA (307 aa). An adenylation region spans residues 563–950; the sequence is RAAEAPDADA…GRVDQQVKVR (388 aa). Residues 1350-1425 enclose the Carrier 2 domain; sequence EPLEAHEQAL…GLARHLQAQT (76 aa). O-(pantetheine 4'-phosphoryl)serine is present on S1385.

It belongs to the NRP synthetase family. Pantetheine 4'-phosphate serves as cofactor.

It catalyses the reaction holo-[peptidyl-carrier protein] + L-cysteine + ATP = L-cysteinyl-[peptidyl-carrier protein] + AMP + diphosphate. The protein operates within siderophore biosynthesis. It participates in antifungal biosynthesis. Functionally, involved in the biosynthesis of the siderophore pyochelin. Accepts salicylate activated by PchD at the first peptidyl carrier domain (ArCP), and activates and fixes one molecule of cysteine at the second peptidyl carrier domain (PCP1) via a thioester linkage to the phosphopanthetheine moiety. Then catalyzes the condensation reaction between the salicylate bound to the first site and the cysteine bound to the second site, and the cyclization of the cysteine to form the salicyl-thiazolinyl-S-PCP1 intermediate at the second site. When this intermediate is released by the action of a thioesterase, it produces the antifungal antibiotic dihydroaeruginoic acid (Dha or hydroxyphenyl-thiazolinyl-carboxylate). The polypeptide is Pyochelin synthetase PchE (Pseudomonas aeruginosa (strain UCBPP-PA14)).